A 488-amino-acid chain; its full sequence is Spermatogenesis-associated protein 6 (488 aa).

The signal sequence occupies residues 1–17; it reads MPKVKALQCALALEIRS. The tract at residues 176–225 is disordered; sequence HGRLQCRTSRSQKKKSKSPERSKYCINTKNYEQPTISSKSHSPSPYTKRR. Residues 200–220 are compositionally biased toward polar residues; that stretch reads CINTKNYEQPTISSKSHSPSP. Phosphoserine is present on residues Ser-217 and Ser-219. Lys-248 is covalently cross-linked (Glycyl lysine isopeptide (Lys-Gly) (interchain with G-Cter in SUMO2)). Phosphoserine is present on residues Ser-265, Ser-274, Ser-325, Ser-343, Ser-346, Ser-354, Ser-424, Ser-465, and Ser-487.

Belongs to the SPATA6 family. As to quaternary structure, interacts with MYL6. In terms of tissue distribution, specifically expressed in developing spermatids and mature spermatozoa (at protein level). Isoform 1 is weakly expressed in testis, ovary, thymus and placenta. Isoform 2 and isoform 3 are testis-specific. Expression isw higher in spermatids than in spermatocytes and spermatogonia.

The protein localises to the secreted. Its subcellular location is the cell projection. It localises to the cilium. It is found in the flagellum. Required for formation of the sperm connecting piece during spermiogenesis. Sperm connecting piece is essential for linking the developing flagellum to the head during late spermiogenesis. May be involved in myosin-based microfilament transport through interaction with myosin subunits. The chain is Spermatogenesis-associated protein 6 from Mus musculus (Mouse).